The following is a 274-amino-acid chain: Urease accessory protein UreD 2 (274 aa).

The protein belongs to the UreD family. In terms of assembly, ureD, UreF and UreG form a complex that acts as a GTP-hydrolysis-dependent molecular chaperone, activating the urease apoprotein by helping to assemble the nickel containing metallocenter of UreC. The UreE protein probably delivers the nickel.

It is found in the cytoplasm. Functionally, required for maturation of urease via the functional incorporation of the urease nickel metallocenter. The polypeptide is Urease accessory protein UreD 2 (Brucella anthropi (strain ATCC 49188 / DSM 6882 / CCUG 24695 / JCM 21032 / LMG 3331 / NBRC 15819 / NCTC 12168 / Alc 37) (Ochrobactrum anthropi)).